The sequence spans 294 residues: Protein RarD (294 aa).

The Cytoplasmic segment spans residues 1–11; the sequence is MDAKQTRQGVL. The chain crosses the membrane as a helical span at residues 12-34; it reads LALAAYFIWGIAPAYFKLIYYVP. The EamA domain maps to 18-145; the sequence is FIWGIAPAYF…AVCGVLVQLW (128 aa). The Periplasmic portion of the chain corresponds to 35 to 37; that stretch reads ADE. A helical membrane pass occupies residues 38-60; the sequence is ILTHRVIWSFFFMVALLSVSRQW. Residues 61-72 lie on the Cytoplasmic side of the membrane; sequence RQVKRLLKTPKK. A helical membrane pass occupies residues 73–95; the sequence is IFLLALSAVLVGGNWLLFIWAVN. Topologically, residues 96–99 are periplasmic; it reads NHHM. The helical transmembrane segment at 100–122 threads the bilayer; the sequence is LEASLGYFINPLVNILLGMIFLG. The Cytoplasmic segment spans residues 123–128; sequence ERFRRM. Residues 129–146 form a helical membrane-spanning segment; it reads QWLAVILAVCGVLVQLWT. The Periplasmic segment spans residues 147–149; it reads FGS. A helical transmembrane segment spans residues 150 to 167; it reads LPIIALGLAFSFAFYGLV. Residues 168 to 179 are Cytoplasmic-facing; the sequence is RKKIAVEAQTGM. The helical transmembrane segment at 180–197 threads the bilayer; sequence LVETLWLLPVAAIYLFGI. Over 198–211 the chain is Periplasmic; sequence ADSPTSHMGQNALS. A helical transmembrane segment spans residues 212–234; it reads LNLLLMAAGVVTTIPLLCFTGAA. Over 235–238 the chain is Cytoplasmic; the sequence is TRLR. Residues 239–261 form a helical membrane-spanning segment; the sequence is LSTLGFFQYIGPTLMFLLAVTFY. Topologically, residues 262–270 are periplasmic; the sequence is GEVPGADKM. The chain crosses the membrane as a helical span at residues 271–290; sequence VTFAFIWVALAIFVMDAIYT. The Cytoplasmic portion of the chain corresponds to 291–294; that stretch reads QRKK.

The protein belongs to the EamA transporter family.

It localises to the cell inner membrane. In Salmonella typhimurium (strain LT2 / SGSC1412 / ATCC 700720), this protein is Protein RarD (rarD).